The sequence spans 129 residues: Small ribosomal subunit protein uS11 (129 aa).

Belongs to the universal ribosomal protein uS11 family. In terms of assembly, part of the 30S ribosomal subunit. Interacts with proteins S7 and S18. Binds to IF-3.

In terms of biological role, located on the platform of the 30S subunit, it bridges several disparate RNA helices of the 16S rRNA. Forms part of the Shine-Dalgarno cleft in the 70S ribosome. This is Small ribosomal subunit protein uS11 from Rhodopseudomonas palustris (strain BisB5).